We begin with the raw amino-acid sequence, 228 residues long: Homeobox protein Hox-B6a (228 aa).

The short motif at valine 132 to glutamine 137 is the Antp-type hexapeptide element. Positions glycine 150–asparagine 209 form a DNA-binding region, homeobox.

This sequence belongs to the Antp homeobox family.

It localises to the nucleus. In terms of biological role, sequence-specific transcription factor which is part of a developmental regulatory system that provides cells with specific positional identities on the anterior-posterior axis. This Danio rerio (Zebrafish) protein is Homeobox protein Hox-B6a (hoxb6a).